We begin with the raw amino-acid sequence, 440 residues long: Xylose isomerase (440 aa).

Residues histidine 101 and aspartate 104 contribute to the active site. The Mg(2+) site is built by glutamate 232, glutamate 268, histidine 271, aspartate 296, aspartate 307, aspartate 309, and aspartate 339.

It belongs to the xylose isomerase family. In terms of assembly, homotetramer. Mg(2+) serves as cofactor.

The protein localises to the cytoplasm. The enzyme catalyses alpha-D-xylose = alpha-D-xylulofuranose. The chain is Xylose isomerase from Salmonella agona (strain SL483).